The following is a 65-amino-acid chain: Beta-mammal toxin Tpa2 (65 aa).

Residues 2–64 enclose the LCN-type CS-alpha/beta domain; that stretch reads KEGYLVGNDG…TWSRATNRCG (63 aa). Disulfide bonds link cysteine 12-cysteine 63, cysteine 16-cysteine 38, cysteine 24-cysteine 44, and cysteine 28-cysteine 46.

Expressed by the venom gland.

The protein localises to the secreted. Beta toxins bind voltage-independently at site-4 of sodium channels (Nav) and shift the voltage of activation toward more negative potentials thereby affecting sodium channel activation and promoting spontaneous and repetitive firing. This toxin is lethal to mice. This chain is Beta-mammal toxin Tpa2, found in Tityus pachyurus (Colombian scorpion).